We begin with the raw amino-acid sequence, 204 residues long: Recombination protein RecR (204 aa).

The C4-type zinc-finger motif lies at 61-76; it reads CARCNTFSETQICSTC. In terms of domain architecture, Toprim spans 84–183; sequence SLLCIVETPA…KVTRIARGIP (100 aa).

It belongs to the RecR family.

May play a role in DNA repair. It seems to be involved in an RecBC-independent recombinational process of DNA repair. It may act with RecF and RecO. This chain is Recombination protein RecR, found in Polynucleobacter asymbioticus (strain DSM 18221 / CIP 109841 / QLW-P1DMWA-1) (Polynucleobacter necessarius subsp. asymbioticus).